The following is a 177-amino-acid chain: Non-specific lipid transfer protein GPI-anchored 22 (177 aa).

Residues 1-29 (MARFMAYNQNPQMLALCITVAVMFLGVRS) form the signal peptide. 4 cysteine pairs are disulfide-bonded: Cys-38–Cys-81, Cys-48–Cys-63, Cys-64–Cys-108, and Cys-79–Cys-117. The N-linked (GlcNAc...) asparagine glycan is linked to Asn-113. Ser-152 is lipidated: GPI-anchor amidated serine. The propeptide at 153–177 (SSIKGRDNKQFGLMMAGALSIWYIM) is removed in mature form.

It belongs to the plant LTP family. As to expression, expressed in seedlings, preferentially in hypocotyls and roots. Also observed in siliques.

It is found in the cell membrane. In terms of biological role, probable lipid transfer protein. The protein is Non-specific lipid transfer protein GPI-anchored 22 of Arabidopsis thaliana (Mouse-ear cress).